The sequence spans 465 residues: Ribulose bisphosphate carboxylase large chain (465 aa).

Lys4 carries the post-translational modification N6,N6,N6-trimethyllysine. 2 residues coordinate substrate: Asn113 and Thr163. The active-site Proton acceptor is the Lys165. Residue Lys167 participates in substrate binding. Lys191, Asp193, and Glu194 together coordinate Mg(2+). Lys191 carries the N6-carboxylysine modification. The active-site Proton acceptor is the His284. Substrate-binding residues include Arg285, His317, and Ser369.

It belongs to the RuBisCO large chain family. Type I subfamily. Heterohexadecamer of 8 large chains and 8 small chains; disulfide-linked. The disulfide link is formed within the large subunit homodimers. It depends on Mg(2+) as a cofactor. The disulfide bond which can form in the large chain dimeric partners within the hexadecamer appears to be associated with oxidative stress and protein turnover.

It localises to the plastid. It is found in the chloroplast. It carries out the reaction 2 (2R)-3-phosphoglycerate + 2 H(+) = D-ribulose 1,5-bisphosphate + CO2 + H2O. It catalyses the reaction D-ribulose 1,5-bisphosphate + O2 = 2-phosphoglycolate + (2R)-3-phosphoglycerate + 2 H(+). RuBisCO catalyzes two reactions: the carboxylation of D-ribulose 1,5-bisphosphate, the primary event in carbon dioxide fixation, as well as the oxidative fragmentation of the pentose substrate in the photorespiration process. Both reactions occur simultaneously and in competition at the same active site. The chain is Ribulose bisphosphate carboxylase large chain from Nepenthes alata (Winged pitcher plant).